The sequence spans 92 residues: Phenol 2-monooxygenase, auxiliary component DmpK (92 aa).

In terms of assembly, homotrimer or homotetramer. Interacts with the phenol hydroxylase components DmpL (P1 component) and DmpN (P3 component).

Its pathway is aromatic compound metabolism; phenol degradation. DmpK is an auxiliary protein associated with the multicomponent phenol hydroxylase DmpLMNOP and it may be involved in the post-translational incorporation of iron into the oxygenase component of the phenol hydroxylase. Required for growth on phenol but not for in vitro phenol hydroxylase activity. This Pseudomonas sp. (strain CF600) protein is Phenol 2-monooxygenase, auxiliary component DmpK.